The following is a 309-amino-acid chain: Ribosomal protein L11 methyltransferase (309 aa).

Residues Thr-152, Gly-178, Asp-200, and Asn-242 each coordinate S-adenosyl-L-methionine.

This sequence belongs to the methyltransferase superfamily. PrmA family.

It localises to the cytoplasm. It catalyses the reaction L-lysyl-[protein] + 3 S-adenosyl-L-methionine = N(6),N(6),N(6)-trimethyl-L-lysyl-[protein] + 3 S-adenosyl-L-homocysteine + 3 H(+). In terms of biological role, methylates ribosomal protein L11. This chain is Ribosomal protein L11 methyltransferase, found in Pelobacter propionicus (strain DSM 2379 / NBRC 103807 / OttBd1).